We begin with the raw amino-acid sequence, 183 residues long: 1,6-anhydro-N-acetylmuramyl-L-alanine amidase AmpD (183 aa).

Residues 30–167 (LLVVHNISLP…APDRKTDPGP (138 aa)) form the N-acetylmuramoyl-L-alanine amidase domain. Residue His34 participates in Zn(2+) binding. Residue Glu116 is the Proton acceptor of the active site. Positions 154 and 164 each coordinate Zn(2+).

It belongs to the N-acetylmuramoyl-L-alanine amidase 2 family. It depends on Zn(2+) as a cofactor.

The protein resides in the cytoplasm. It catalyses the reaction Hydrolyzes the link between N-acetylmuramoyl residues and L-amino acid residues in certain cell-wall glycopeptides.. Functionally, involved in cell wall peptidoglycan recycling. Specifically cleaves the amide bond between the lactyl group of N-acetylmuramic acid and the alpha-amino group of the L-alanine in degradation products containing an anhydro N-acetylmuramyl moiety. Is also involved in beta-lactamase induction. The polypeptide is 1,6-anhydro-N-acetylmuramyl-L-alanine amidase AmpD (ampD) (Escherichia coli (strain K12)).